Here is a 142-residue protein sequence, read N- to C-terminus: MKTFSAKPHEVKRDWYVIDATDKVLGRVASEVARRLRGKHKPEFTPHVDTGDYIIIVNAAKLRVTGTKETDKKYYRHSGYPGGIYETTFGKMQQRFPGRALEKAVKGMLPKGPLGYAMIKKLKVYAEAEHPHEAQQPKALEI.

Belongs to the universal ribosomal protein uL13 family. In terms of assembly, part of the 50S ribosomal subunit.

In terms of biological role, this protein is one of the early assembly proteins of the 50S ribosomal subunit, although it is not seen to bind rRNA by itself. It is important during the early stages of 50S assembly. The protein is Large ribosomal subunit protein uL13 of Cupriavidus necator (strain ATCC 17699 / DSM 428 / KCTC 22496 / NCIMB 10442 / H16 / Stanier 337) (Ralstonia eutropha).